Reading from the N-terminus, the 451-residue chain is Magnesium transporter MgtE (451 aa).

The Cytoplasmic segment spans residues 1-285 (MVQNMTYDEL…TKAYVAAYRR (285 aa)). Mg(2+) contacts are provided by Asp64 and Asp96. 2 CBS domains span residues 140–203 (MTNR…VQDL) and 204–260 (MFTR…EADE). Mg(2+) is bound by residues Glu218, Asp228, Asp249, Asp252, Glu257, Glu260, and Asp261. A helical transmembrane segment spans residues 286–306 (LPWLILLLFIGLISGSIISYF). Residues 307–311 (EDALK) are Extracellular-facing. A helical transmembrane segment spans residues 312 to 332 (QVVALAFFMPMVSGMTGNTGT). Residues 333 to 371 (QSLAVVIRGLSKEEMNKKTIVRLIFREFRTSIFIGAVCS) lie on the Cytoplasmic side of the membrane. 2 helical membrane-spanning segments follow: residues 372–392 (VLIAIVSIIWQGNALLGFVVA) and 393–413 (SSLFLTLIIGTMSGTIIPIIL). At 414 to 427 (HKLKVDPAIASGPL) the chain is on the cytoplasmic side. 2 residues coordinate Mg(2+): Asp419 and Asp433. Residues 428-448 (ITTLNDILSLLIYFGIATAFI) form a helical membrane-spanning segment. The Extracellular segment spans residues 449 to 451 (HSL).

It belongs to the SLC41A transporter family. Homodimer.

It localises to the cell membrane. It catalyses the reaction Mg(2+)(in) = Mg(2+)(out). Binds cyclic di-AMP (c-di-AMP), which may regulate the transporter activity. Acts as a magnesium transporter. MgtE is the dominant transporter under rich-medium growth conditions, and it may provide the primary route of magnesium import in B.subtilis, while the other putative transport proteins are likely to be utilized for more-specialized growth conditions. The polypeptide is Magnesium transporter MgtE (Bacillus subtilis (strain 168)).